We begin with the raw amino-acid sequence, 379 residues long: Deoxyguanosinetriphosphate triphosphohydrolase-like protein (379 aa).

In terms of domain architecture, HD spans 69-200; sequence RLTHTIEVAQ…ANLADEIAYS (132 aa).

Belongs to the dGTPase family. Type 2 subfamily.

The protein is Deoxyguanosinetriphosphate triphosphohydrolase-like protein of Azoarcus sp. (strain BH72).